Reading from the N-terminus, the 608-residue chain is Serine/arginine repetitive matrix protein 4 (608 aa).

2 disordered regions span residues 34 to 246 and 261 to 608; these read ASIT…PLPR and SAAD…STRR. Positions 78–100 are enriched in basic and acidic residues; it reads GREKACRELDPARAHSASQDRDP. 2 stretches are compositionally biased toward basic residues: residues 107 to 123 and 131 to 187; these read RGKKKKKKSTRKKRRRS and VKKK…HRCP. Residues 188-200 are compositionally biased toward low complexity; sequence SRSQSSELRSPSC. Positions 201-213 are enriched in basic and acidic residues; that stretch reads ESRHRGRSPEEGR. Basic residues predominate over residues 214 to 228; sequence KSRRTHSRRCSKNHC. Positions 289–299 are enriched in low complexity; it reads TSSPPSTQTSS. Over residues 322–339 the composition is skewed to polar residues; that stretch reads CGNTSDSGNSFTTSSPQN. Composition is skewed to low complexity over residues 389 to 420 and 428 to 459; these read RSSSYTSTRSSSPSSRSPNPRASPRYTRSRST and SRSPSYSSKSGKRSPPSRSSRSRRSPSYSRYS. Residues 460 to 477 are compositionally biased toward basic and acidic residues; that stretch reads PSRERDLKYGEKEPQPRE. Residues 478–494 are compositionally biased toward basic residues; sequence RARRRRRSYSPMRKRRR. Over residues 495–504 the composition is skewed to basic and acidic residues; the sequence is DSPSHLEARR. Low complexity predominate over residues 518 to 555; the sequence is PSPSSSSSLSSASSWYSSSSSSSSSSSRSPSRSYSRSR. Residues 556-573 show a composition bias toward basic residues; it reads SPSRSHSSRSQTRSRTRT. Residues 574–608 are compositionally biased toward low complexity; it reads SRSSSSRSLSLGSRSRSRNRSLSYSSAESYASTRR.

Belongs to the nSR100 family. Post-translationally, phosphorylated. Specifically expressed in neuronal cells (at protein level). Expressed in adult nervous system and sensory organ tissues.

It is found in the nucleus. Splicing factor specifically required for neural cell differentiation. Acts in conjunction with nPTB/PTBP2 by binding directly to its regulated target transcripts and promotes neural-specific exon inclusion in many genes that function in neural cell differentiation. Required to promote the inclusion of neural-specific exon 10 in nPTB/PTBP2, leading to increased expression of neural-specific nPTB/PTBP2. Also promotes the inclusion of exon 16 in DAAM1 in neuron extracts. Promotes alternative splicing of REST transcripts to produce REST isoform 2 (REST4) with greatly reduced repressive activity, thereby activating expression of REST targets in neural cells. Plays an important role during embryonic development as well as in the proper functioning of the adult nervous system. Regulates alternative splicing events in genes with important neuronal functions. The protein is Serine/arginine repetitive matrix protein 4 (Srrm4) of Mus musculus (Mouse).